A 286-amino-acid chain; its full sequence is Shikimate dehydrogenase (NADP(+)) (286 aa).

Residues 20–22 and S67 each bind shikimate; that span reads SLS. K71 (proton acceptor) is an active-site residue. Positions 92 and 107 each coordinate shikimate. Residues 131-135 and A230 each bind NADP(+); that span reads GGGGA. Y232 provides a ligand contact to shikimate. Position 253 (G253) interacts with NADP(+).

This sequence belongs to the shikimate dehydrogenase family. As to quaternary structure, homodimer.

It carries out the reaction shikimate + NADP(+) = 3-dehydroshikimate + NADPH + H(+). The protein operates within metabolic intermediate biosynthesis; chorismate biosynthesis; chorismate from D-erythrose 4-phosphate and phosphoenolpyruvate: step 4/7. In terms of biological role, involved in the biosynthesis of the chorismate, which leads to the biosynthesis of aromatic amino acids. Catalyzes the reversible NADPH linked reduction of 3-dehydroshikimate (DHSA) to yield shikimate (SA). This chain is Shikimate dehydrogenase (NADP(+)), found in Lactococcus lactis subsp. cremoris (strain SK11).